Reading from the N-terminus, the 364-residue chain is Protein spindle-F (364 aa).

A disordered region spans residues Met1–Ser26. Low complexity predominate over residues Thr9–Ser26. Residues Ala32–Leu114 are a coiled coil. Residue Ser53 is modified to Phosphoserine. Positions Glu56–Asn75 are disordered. A phosphoserine mark is found at Ser85, Ser172, and Ser202. Residues Ala210–Ala243 are a coiled coil. 2 positions are modified to phosphoserine: Ser264 and Ser270. Residues Glu310 to His336 form a UBZ1-type zinc finger. Positions 313 and 316 each coordinate Zn(2+). Ser325 carries the phosphoserine modification. Residues His332 and His336 each coordinate Zn(2+). Ser349 carries the post-translational modification Phosphoserine.

In terms of assembly, forms homooligomers. Interacts with the dynein light chain ctp. Interacts (via C-terminus) with IKKepsilon; this leads to phosphorylation of spn-F. Forms ternary complexes with ctp and IKKepsilon; this is required for spn-F redistribution from puncta in larval neurons and for dendrite pruning. Interacts with ctp and IKKepsilon through distinct regions. Interacts (via C-terminus) with jvl. In terms of processing, phosphorylated by IKKepsilon. Phosphorylation is required for spn-F neuronal distribution and dendrite pruning and reduces spn-F homooligomerization. It does not lead to spn-F degradation. As to expression, in pupal bristles, localizes to the bristle tip throughout the elongation period (at protein level).

The protein resides in the cytoplasm. It is found in the cytoskeleton. Its subcellular location is the cell projection. The protein localises to the axon. It localises to the dendrite. The protein resides in the perikaryon. Functionally, plays a role in oocyte axis determination and microtubule organization during oogenesis. Also required for polarized organization of the bristle. Required, with jvl, for activation of the kinase IKKepsilon in the germ line. Also required for localization of IKKepsilon to the distal tip of elongating bristles by acting as an adapter linking IKKepsilon and cytoplasmic dynein. Involved in dendrite pruning in larval sensory neurons during metamorphosis. This Drosophila melanogaster (Fruit fly) protein is Protein spindle-F.